Consider the following 234-residue polypeptide: Adenylate dimethylallyltransferase (234 aa).

This sequence belongs to the isopentenyl transferase family.

It catalyses the reaction dimethylallyl diphosphate + AMP = N(6)-(dimethylallyl)adenosine 5'-phosphate + diphosphate. Functionally, transfers dimethylallyl groups to AMP as part of the biosynthesis of cytokinin phytohormones. This chain is Adenylate dimethylallyltransferase (ptz), found in Pseudomonas savastanoi (Pseudomonas syringae pv. savastanoi).